A 293-amino-acid polypeptide reads, in one-letter code: MTNSKNRFGNKFIGAHVSAAGGVDNAPLRAREIGANAFALFTKNQRQWVAKPLEEKTISAFKANCALLGFSPQQILPHDSYLINLGAPEAEKLEKSRLAFIDEMERCQLLGLNLLNFHPGSHLEKISEKACLYLIAESINLAHQAVPDVVAVIENTAGQGSNLGWRFEHLAEIIEQVEDKSRVGVCLDTCHTFAAGYDLRTPEACEATFAEFERVVGMHYLRAMHINDSKVKLASKVDRHHALGKGEIGWDCFEYIAKDSRFDSIPLILETIEPELWPQEIEQLRKYHLSSIA.

Residues H78, H118, E154, D188, H191, H225, D238, H240, and E270 each contribute to the Zn(2+) site.

It belongs to the AP endonuclease 2 family. The cofactor is Zn(2+).

It carries out the reaction Endonucleolytic cleavage to 5'-phosphooligonucleotide end-products.. Functionally, endonuclease IV plays a role in DNA repair. It cleaves phosphodiester bonds at apurinic or apyrimidinic (AP) sites, generating a 3'-hydroxyl group and a 5'-terminal sugar phosphate. In Vibrio vulnificus (strain YJ016), this protein is Probable endonuclease 4.